Reading from the N-terminus, the 166-residue chain is NADPH-dependent 7-cyano-7-deazaguanine reductase (166 aa).

The active-site Thioimide intermediate is the cysteine 57. Residue aspartate 64 is the Proton donor of the active site. Substrate is bound by residues 79 to 81 and 98 to 99; these read VES and HE.

Belongs to the GTP cyclohydrolase I family. QueF type 1 subfamily.

It is found in the cytoplasm. It carries out the reaction 7-aminomethyl-7-carbaguanine + 2 NADP(+) = 7-cyano-7-deazaguanine + 2 NADPH + 3 H(+). It functions in the pathway tRNA modification; tRNA-queuosine biosynthesis. Functionally, catalyzes the NADPH-dependent reduction of 7-cyano-7-deazaguanine (preQ0) to 7-aminomethyl-7-deazaguanine (preQ1). The polypeptide is NADPH-dependent 7-cyano-7-deazaguanine reductase (Alkaliphilus metalliredigens (strain QYMF)).